The sequence spans 589 residues: Isocitrate dehydrogenase kinase/phosphatase (589 aa).

Residues 317–323 and Lys-338 contribute to the ATP site; that span reads AAGIKGM. Asp-373 is a catalytic residue.

Belongs to the AceK family.

It localises to the cytoplasm. The enzyme catalyses L-seryl-[isocitrate dehydrogenase] + ATP = O-phospho-L-seryl-[isocitrate dehydrogenase] + ADP + H(+). Its function is as follows. Bifunctional enzyme which can phosphorylate or dephosphorylate isocitrate dehydrogenase (IDH) on a specific serine residue. This is a regulatory mechanism which enables bacteria to bypass the Krebs cycle via the glyoxylate shunt in response to the source of carbon. When bacteria are grown on glucose, IDH is fully active and unphosphorylated, but when grown on acetate or ethanol, the activity of IDH declines drastically concomitant with its phosphorylation. The protein is Isocitrate dehydrogenase kinase/phosphatase of Colwellia psychrerythraea (strain 34H / ATCC BAA-681) (Vibrio psychroerythus).